The primary structure comprises 246 residues: tRNA pseudouridine synthase A (246 aa).

D51 serves as the catalytic Nucleophile. Residue Y105 participates in substrate binding.

Belongs to the tRNA pseudouridine synthase TruA family.

It catalyses the reaction uridine(38/39/40) in tRNA = pseudouridine(38/39/40) in tRNA. Formation of pseudouridine at positions 38, 39 and 40 in the anticodon stem and loop of transfer RNAs. This chain is tRNA pseudouridine synthase A, found in Thermoplasma volcanium (strain ATCC 51530 / DSM 4299 / JCM 9571 / NBRC 15438 / GSS1).